A 432-amino-acid polypeptide reads, in one-letter code: Interleukin-11 receptor subunit alpha-2 (432 aa).

An N-terminal signal peptide occupies residues 1 to 23 (MSSSCSGLTRVLVAVATALVSSS). Residues 24-372 (SPCPQAWGPP…DPLEQVAVLA (349 aa)) are Extracellular-facing. Residues 27–110 (PQAWGPPGVQ…SGGMVTLKLG (84 aa)) form the Ig-like C2-type domain. Intrachain disulfides connect C48/C94, C120/C130, and C170/C180. Fibronectin type-III domains follow at residues 112-219 (PPAR…LRPD) and 220-317 (PPQG…TPST). N127 carries N-linked (GlcNAc...) asparagine glycosylation. Residues 151–170 (KTLPGAESQRESPSTGPWPC) form a disordered region. The N-linked (GlcNAc...) asparagine glycan is linked to N194. Residues 304 to 308 (WSAWS) carry the WSXWS motif motif. Residues 373–393 (SLGIFSCLGLAVGALALGLWL) traverse the membrane as a helical segment. At 394 to 432 (RLRRSGKEGPQKPGLLAPMIPVEKLPGIPNLQRTPENFS) the chain is on the cytoplasmic side.

It belongs to the type I cytokine receptor family. Type 3 subfamily. On ligand binding, forms a multimer complex with IL6ST/gp130. As to expression, expression restricted to testis, lymph node and thymus. Highest level in testis.

Its subcellular location is the membrane. Its function is as follows. Receptor for interleukin-11. The receptor systems for IL6, LIF, OSM, CNTF, IL11 and CT1 can utilize IL6ST for initiating signal transmission. The IL11/IL11RA/IL6ST complex may be involved in the control of proliferation and/or differentiation of skeletogenic progenitor or other mesenchymal cells. The chain is Interleukin-11 receptor subunit alpha-2 (Il11ra2) from Mus musculus (Mouse).